Here is a 762-residue protein sequence, read N- to C-terminus: Cellulose synthase-like protein H2 (762 aa).

The segment covering Met-1 to Arg-15 has biased composition (low complexity). Residues Met-1–Arg-39 form a disordered region. Helical transmembrane passes span Ala-47 to Leu-67 and Gly-81 to Val-101. Catalysis depends on residues Asp-180 and Asp-470. A run of 6 helical transmembrane segments spans residues Leu-541 to Leu-561, Phe-582 to Ala-602, Ile-619 to Leu-639, Leu-673 to Gly-693, Ala-708 to Val-728, and Gly-739 to Cys-759.

This sequence belongs to the glycosyltransferase 2 family. Plant cellulose synthase-like H subfamily.

The protein resides in the golgi apparatus membrane. Thought to be a Golgi-localized beta-glycan synthase that polymerize the backbones of noncellulosic polysaccharides (hemicelluloses) of plant cell wall. The protein is Cellulose synthase-like protein H2 (CSLH2) of Oryza sativa subsp. indica (Rice).